We begin with the raw amino-acid sequence, 67 residues long: Small ribosomal subunit protein bS21 (67 aa).

Belongs to the bacterial ribosomal protein bS21 family.

The chain is Small ribosomal subunit protein bS21 from Hydrogenobaculum sp. (strain Y04AAS1).